The sequence spans 138 residues: Nucleoside diphosphate kinase (138 aa).

6 residues coordinate ATP: Lys9, Phe57, Arg85, Thr91, Arg102, and Asn112. The active-site Pros-phosphohistidine intermediate is the His120.

This sequence belongs to the NDK family. As to quaternary structure, homotetramer. Mg(2+) serves as cofactor.

It localises to the cytoplasm. It catalyses the reaction a 2'-deoxyribonucleoside 5'-diphosphate + ATP = a 2'-deoxyribonucleoside 5'-triphosphate + ADP. It carries out the reaction a ribonucleoside 5'-diphosphate + ATP = a ribonucleoside 5'-triphosphate + ADP. Its function is as follows. Major role in the synthesis of nucleoside triphosphates other than ATP. The ATP gamma phosphate is transferred to the NDP beta phosphate via a ping-pong mechanism, using a phosphorylated active-site intermediate. In Streptococcus agalactiae serotype V (strain ATCC BAA-611 / 2603 V/R), this protein is Nucleoside diphosphate kinase.